The primary structure comprises 114 residues: Anti-sigma-B factor antagonist (114 aa).

Positions 4–114 (SIEIKERDTD…VEGEMNGNNA (111 aa)) constitute an STAS domain. Phosphoserine is present on Ser58.

This sequence belongs to the anti-sigma-factor antagonist family. In terms of processing, phosphorylated by RsbW on a serine residue.

Functionally, positive regulator of sigma-B activity. Non-phosphorylated RsbV binds to RsbW, preventing its association with sigma-B. When phosphorylated, releases RsbW, which is then free to complex with and inactivate sigma-B. The polypeptide is Anti-sigma-B factor antagonist (rsbV) (Listeria innocua serovar 6a (strain ATCC BAA-680 / CLIP 11262)).